Reading from the N-terminus, the 150-residue chain is Deoxyuridine 5'-triphosphate nucleotidohydrolase (150 aa).

Substrate-binding positions include R69 to G71, N82, L86 to D88, and K96.

The protein belongs to the dUTPase family. It depends on Mg(2+) as a cofactor.

The enzyme catalyses dUTP + H2O = dUMP + diphosphate + H(+). Its pathway is pyrimidine metabolism; dUMP biosynthesis; dUMP from dCTP (dUTP route): step 2/2. Functionally, this enzyme is involved in nucleotide metabolism: it produces dUMP, the immediate precursor of thymidine nucleotides and it decreases the intracellular concentration of dUTP so that uracil cannot be incorporated into DNA. The protein is Deoxyuridine 5'-triphosphate nucleotidohydrolase of Neisseria meningitidis serogroup A / serotype 4A (strain DSM 15465 / Z2491).